The primary structure comprises 254 residues: Thiazole synthase (254 aa).

The Schiff-base intermediate with DXP role is filled by K95. 1-deoxy-D-xylulose 5-phosphate-binding positions include G156, 182-183, and 204-205; these read AG and NT.

Belongs to the ThiG family. As to quaternary structure, homotetramer. Forms heterodimers with either ThiH or ThiS.

It is found in the cytoplasm. The catalysed reaction is [ThiS sulfur-carrier protein]-C-terminal-Gly-aminoethanethioate + 2-iminoacetate + 1-deoxy-D-xylulose 5-phosphate = [ThiS sulfur-carrier protein]-C-terminal Gly-Gly + 2-[(2R,5Z)-2-carboxy-4-methylthiazol-5(2H)-ylidene]ethyl phosphate + 2 H2O + H(+). It participates in cofactor biosynthesis; thiamine diphosphate biosynthesis. Its function is as follows. Catalyzes the rearrangement of 1-deoxy-D-xylulose 5-phosphate (DXP) to produce the thiazole phosphate moiety of thiamine. Sulfur is provided by the thiocarboxylate moiety of the carrier protein ThiS. In vitro, sulfur can be provided by H(2)S. The polypeptide is Thiazole synthase (Shewanella putrefaciens (strain CN-32 / ATCC BAA-453)).